The sequence spans 543 residues: Mitochondrial distribution and morphology protein 34 (543 aa).

The SMP-LTD domain occupies 1–202 (MSFNVNWNSL…LPTLLHKVSL (202 aa)). Positions 519 to 543 (AFSHNDPSITPFELPPPPYHQLSRA) are disordered.

This sequence belongs to the MDM34 family. In terms of assembly, component of the ER-mitochondria encounter structure (ERMES) or MDM complex, composed of MMM1, MDM10, MDM12 and MDM34.

Its subcellular location is the mitochondrion outer membrane. Functionally, component of the ERMES/MDM complex, which serves as a molecular tether to connect the endoplasmic reticulum (ER) and mitochondria. Components of this complex are involved in the control of mitochondrial shape and protein biogenesis, and function in nonvesicular lipid trafficking between the ER and mitochondria. MDM34 is required for the interaction of the ER-resident membrane protein MMM1 and the outer mitochondrial membrane-resident beta-barrel protein MDM10. The sequence is that of Mitochondrial distribution and morphology protein 34 from Clavispora lusitaniae (strain ATCC 42720) (Yeast).